Consider the following 413-residue polypeptide: N-acylneuraminate cytidylyltransferase (413 aa).

It belongs to the CMP-NeuNAc synthase family. Mg(2+) serves as cofactor. Requires Mn(2+) as cofactor.

It is found in the cytoplasm. It catalyses the reaction an N-acylneuraminate + CTP = a CMP-N-acyl-beta-neuraminate + diphosphate. In terms of biological role, catalyzes the formation of CMP-N-acetylneuraminic acid (CMP-NeuNAc), which is essential for the formation of the capsule. The sequence is that of N-acylneuraminate cytidylyltransferase (neuA) from Streptococcus agalactiae serotype V (strain ATCC BAA-611 / 2603 V/R).